Here is a 206-residue protein sequence, read N- to C-terminus: UPF0502 protein Acid_1185 (206 aa).

Belongs to the UPF0502 family.

The polypeptide is UPF0502 protein Acid_1185 (Solibacter usitatus (strain Ellin6076)).